The following is a 158-amino-acid chain: Pyruvoyl-dependent arginine decarboxylase (158 aa).

The residue at position 44 (S44) is a Pyruvic acid (Ser).

This sequence belongs to the PdaD family. The cofactor is pyruvate.

It carries out the reaction L-arginine + H(+) = agmatine + CO2. In Pyrococcus abyssi (strain GE5 / Orsay), this protein is Pyruvoyl-dependent arginine decarboxylase.